Consider the following 179-residue polypeptide: Fucolectin-4 (179 aa).

The N-terminal stretch at 1–23 (MEVKTIMLLFQILAISTLKQGSA) is a signal peptide. The tract at residues 31–179 (EENVALRGRA…VEVNALLPVN (149 aa)) is F5/8 type C-like. Residues Asn-58, Asp-61, Asn-63, and Ser-72 each coordinate Ca(2+). Intrachain disulfides connect Cys-73-Cys-168, Cys-104-Cys-105, and Cys-130-Cys-146. Alpha-L-fucose is bound by residues His-75 and Arg-101. The Cell attachment site motif lies at 101-103 (RGD). Arg-108 is an alpha-L-fucose binding site. Positions 168 and 169 each coordinate Ca(2+).

The protein belongs to the fucolectin family. As to quaternary structure, homotrimer. Gill mucous cells.

The protein resides in the secreted. In terms of biological role, acts as a defensive agent. Recognizes blood group fucosylated oligosaccharides including A, B, H and Lewis B-type antigens. Does not recognize Lewis A antigen and has low affinity for monovalent haptens. The chain is Fucolectin-4 from Anguilla japonica (Japanese eel).